The chain runs to 124 residues: Holo-[acyl-carrier-protein] synthase (124 aa).

Asp7 and Glu55 together coordinate Mg(2+).

This sequence belongs to the P-Pant transferase superfamily. AcpS family. Mg(2+) is required as a cofactor.

It localises to the cytoplasm. It carries out the reaction apo-[ACP] + CoA = holo-[ACP] + adenosine 3',5'-bisphosphate + H(+). In terms of biological role, transfers the 4'-phosphopantetheine moiety from coenzyme A to a Ser of acyl-carrier-protein. In Borreliella burgdorferi (strain ATCC 35210 / DSM 4680 / CIP 102532 / B31) (Borrelia burgdorferi), this protein is Holo-[acyl-carrier-protein] synthase.